A 1587-amino-acid chain; its full sequence is Sister chromatid cohesion protein mis4 (1587 aa).

Residues 140-172 are disordered; the sequence is PKEKPDASSINTNRSSSDNGFLTPSSSPRSPSC. The segment covering 147–162 has biased composition (polar residues); sequence SSINTNRSSSDNGFLT. The segment covering 163–172 has biased composition (low complexity); it reads PSSSPRSPSC. S183 bears the Phosphoserine mark. 6 HEAT repeats span residues 775-812, 814-851, 853-888, 890-927, 1101-1140, and 1183-1220; these read LNLK…IPSI, RTHP…AYRE, IPQI…ATED, NIRV…SPAS, ATLM…ARHS, and DAYV…RETS.

It belongs to the SCC2/Nipped-B family. Interacts with ssl3.

It localises to the nucleus. It is found in the chromosome. Its function is as follows. Plays a structural role in chromatin. Chromatid cohesion molecule required for equal sister chromatid separation in anaphase. May form a stable link between chromatids in S phase that is split rather than removed in anaphase. Also required for spindle-kinetochore interaction in early mitosis and inhibit sister chromatid separation until the cleavage of Rad21 in anaphase. This Schizosaccharomyces pombe (strain 972 / ATCC 24843) (Fission yeast) protein is Sister chromatid cohesion protein mis4 (mis4).